A 149-amino-acid chain; its full sequence is Angiogenin (149 aa).

The signal sequence occupies residues 1–24 (MVMGLGPLVLIFVLGLGVTPPTLA). A Pyrrolidone carboxylic acid modification is found at Gln-25. The Proton acceptor role is filled by His-37. Arg-45 provides a ligand contact to tRNA. Cystine bridges form between Cys-50-Cys-105, Cys-63-Cys-116, and Cys-81-Cys-131. The Nucleolar localization signal signature appears at 55-59 (KRRDL). Positions 105 and 127 each coordinate tRNA. The active-site Proton donor is the His-138.

The protein belongs to the pancreatic ribonuclease family. Homodimer. Interacts with RNH1; inhibiting ANG ribonuclease activity. Interacts with PCNA.

The protein resides in the secreted. The protein localises to the nucleus. It localises to the nucleolus. It is found in the cytoplasm. Its subcellular location is the stress granule. With respect to regulation, has weak tRNA ribonuclease activity by itself due to partial autoinhibition by its C-terminus, which folds into a short alpha-helix that partially occludes the substrate-binding site. In absence of stress, the ribonuclease activity is inhibited by RNH1 in the cytoplasm. In response to stress, dissociates from RNH1 in the cytoplasm and associates with cytoplasmic ribosomes with vacant A-sites: ribosomes directly activate the tRNA ribonuclease activity of ANG by refolding the C-terminal alpha-helix. In response to stress, the angiogenic activity of ANG is inhibited by RNH1 in the nucleus. Its function is as follows. Secreted ribonuclease that can either promote or restrict cell proliferation of target cells, depending on the context. Endocytosed in target cells via its receptor PLXNB2 and translocates to the cytoplasm or nucleus. Under stress conditions, localizes to the cytoplasm and promotes the assembly of stress granules (SGs): specifically cleaves a subset of tRNAs within anticodon loops to produce tRNA-derived stress-induced fragments (tiRNAs), resulting in translation repression and inhibition of cell proliferation. tiRNas also prevent formation of apoptosome, thereby promoting cell survival. Preferentially cleaves RNAs between a pyrimidine and an adenosine residue, suggesting that it cleaves the anticodon loop of tRNA(Ala) (32-UUAGCAU-38) after positions 33 and 36. Cleaves a subset of tRNAs, including tRNA(Ala), tRNA(Glu), tRNA(Gly), tRNA(Lys), tRNA(Val), tRNA(His), tRNA(Asp) and tRNA(Sec). Under growth conditions and in differentiated cells, translocates to the nucleus and stimulates ribosomal RNA (rRNA) transcription, including that containing the initiation site sequences of 45S rRNA, thereby promoting cell growth and proliferation. Angiogenin induces vascularization of normal and malignant tissues via its ability to promote rRNA transcription. Involved in hematopoietic stem and progenitor cell (HSPC) growth and survival by promoting rRNA transcription in growth conditions and inhibiting translation in response to stress, respectively. Mediates the crosstalk between myeloid and intestinal epithelial cells to protect the intestinal epithelial barrier integrity: secreted by myeloid cells and promotes intestinal epithelial cells proliferation and survival. Also mediates osteoclast-endothelial cell crosstalk in growing bone: produced by osteoclasts and protects the neighboring vascular cells against senescence by promoting rRNA transcription. In Oryctolagus cuniculus (Rabbit), this protein is Angiogenin (ANG).